The sequence spans 283 residues: MAEITASLVKELRERTGAGMMDCKKALTEANGDIELAIENMRKSGAIKAAKKAGNVAADGVIKTKIDGNYGIILEVNCQTDFVAKDAGFQAFADKVLDAAVAGKITDVDVLKAQFEEERVALVAKIGENINIRRVASLEGDVLGSYQHGARIGVLVAAKGADEELVKQLAMHVAASKPEFVKPEDVSAEVVEKEYQVQLDIAMQSGKPKEIAEKMVEGRMKKFTGEVSLTGQPFVMEPSKSVGQLLKEHNADVTGFIRFEVGEGIEKVETDFAAEVAAMSKQS.

The interval 80–83 is involved in Mg(2+) ion dislocation from EF-Tu; the sequence is TDFV.

It belongs to the EF-Ts family.

It is found in the cytoplasm. Associates with the EF-Tu.GDP complex and induces the exchange of GDP to GTP. It remains bound to the aminoacyl-tRNA.EF-Tu.GTP complex up to the GTP hydrolysis stage on the ribosome. This is Elongation factor Ts from Citrobacter koseri (strain ATCC BAA-895 / CDC 4225-83 / SGSC4696).